We begin with the raw amino-acid sequence, 419 residues long: L-rhamnose isomerase (419 aa).

3 residues coordinate Mn(2+): His-262, Asp-294, and Asp-296.

The protein belongs to the rhamnose isomerase family. In terms of assembly, homotetramer. Mn(2+) is required as a cofactor.

The protein localises to the cytoplasm. It catalyses the reaction L-rhamnopyranose = L-rhamnulose. Its pathway is carbohydrate degradation; L-rhamnose degradation; glycerone phosphate from L-rhamnose: step 1/3. In terms of biological role, catalyzes the interconversion of L-rhamnose and L-rhamnulose. This Salmonella paratyphi A (strain AKU_12601) protein is L-rhamnose isomerase.